A 383-amino-acid polypeptide reads, in one-letter code: MRFLDAGETHGKALIAIIEGFPAHVKIDIENINHLLQLRQRGYGRGKRMEIEKDRVKILSGVRNSFTTGAPITLMIENRDYENWRSFMDATQCDVDTKKVTVPRPGHADLAGCLKYEFDDARNVLERASARETAIRVAVGAVCEELLKMFGIKLYNHVVEIGRVRLTKSYSFDDTELFEQALSSSDLFCIDKEAEMKMKEEIDIAKQIGDSVGGIAEVICKNVPYGIGSHVHWDRKLDAQIAHSVMSIQSVKGVEIGMGFEAARRFGSEVHDEIYYDDKKGFYRKTNNAGGIEGGISNGMDIVVRAAFKPIPTLYKPLKSVDIRTFQPAEAAVERSDICAVPAGSIVMRAAIAYVLANALIERLGGDSAKTMLETFKRIYNKG.

R39 and R45 together coordinate NADP(+). Residues 127–129 (RAS), 249–250 (QS), G294, 309–313 (KPIPT), and R335 each bind FMN.

Belongs to the chorismate synthase family. Homotetramer. Requires FMNH2 as cofactor.

It carries out the reaction 5-O-(1-carboxyvinyl)-3-phosphoshikimate = chorismate + phosphate. It participates in metabolic intermediate biosynthesis; chorismate biosynthesis; chorismate from D-erythrose 4-phosphate and phosphoenolpyruvate: step 7/7. In terms of biological role, catalyzes the anti-1,4-elimination of the C-3 phosphate and the C-6 proR hydrogen from 5-enolpyruvylshikimate-3-phosphate (EPSP) to yield chorismate, which is the branch point compound that serves as the starting substrate for the three terminal pathways of aromatic amino acid biosynthesis. This reaction introduces a second double bond into the aromatic ring system. The polypeptide is Chorismate synthase (Caldicellulosiruptor bescii (strain ATCC BAA-1888 / DSM 6725 / KCTC 15123 / Z-1320) (Anaerocellum thermophilum)).